A 953-amino-acid chain; its full sequence is Coatomer subunit beta (953 aa).

Threonine 2 carries the N-acetylthreonine modification. 6 HEAT repeats span residues 96–131, 132–168, 240–276, 277–314, 316–353, and 396–433; these read HEMI…KEAE, LLEP…NFEH, SERA…SAPT, AIKA…HPAH, RVLQ…SRNV, and DMAA…RFDN. At lysine 494 the chain carries N6-acetyllysine.

In terms of assembly, oligomeric complex that consists of at least the alpha, beta, beta', gamma, delta, epsilon and zeta subunits. Interacts with CAPN8 and PRKCE. Interacts with SCYL1. Interacts with COPG1. Interacts with ARF1 (myristoylated); this interaction is required for binding of COPB1 to Golgi membranes. Interacts (via trunk domain) with ARF1 (via switch I region); the interaction is direct. Interacts with KCNK2 (via N-terminus); this interaction increases the channel-mediated whole cell currents and promotes plasma membrane expression of KCNK2. Interacts with STX17. Interacts with TMEM115. Interacts with TMEM41B. High expression in the lung, kidney, skeletal muscle and small intestine, and lower level of expression in heart, liver, spleen, stomach and fat.

It localises to the cytoplasm. It is found in the golgi apparatus membrane. The protein localises to the cytoplasmic vesicle. Its subcellular location is the COPI-coated vesicle membrane. The protein resides in the cell membrane. It localises to the endoplasmic reticulum-Golgi intermediate compartment. Its function is as follows. The coatomer is a cytosolic protein complex that binds to dilysine motifs and reversibly associates with Golgi non-clathrin-coated vesicles, which further mediate biosynthetic protein transport from the ER, via the Golgi up to the trans Golgi network. Coatomer complex is required for budding from Golgi membranes, and is essential for the retrograde Golgi-to-ER transport of dilysine-tagged proteins. In mammals, the coatomer can only be recruited by membranes associated to ADP-ribosylation factors (ARFs), which are small GTP-binding proteins; the complex also influences the Golgi structural integrity, as well as the processing, activity, and endocytic recycling of LDL receptors. Plays a functional role in facilitating the transport of kappa-type opioid receptor mRNAs into axons and enhances translation of these proteins. Required for limiting lipid storage in lipid droplets. Involved in lipid homeostasis by regulating the presence of perilipin family members PLIN2 and PLIN3 at the lipid droplet surface and promoting the association of adipocyte surface triglyceride lipase (PNPLA2) with the lipid droplet to mediate lipolysis. Involved in the Golgi disassembly and reassembly processes during cell cycle. Involved in autophagy by playing a role in early endosome function. Plays a role in organellar compartmentalization of secretory compartments including endoplasmic reticulum (ER)-Golgi intermediate compartment (ERGIC), Golgi, trans-Golgi network (TGN) and recycling endosomes, and in biosynthetic transport of CAV1. The polypeptide is Coatomer subunit beta (Sus scrofa (Pig)).